The following is a 689-amino-acid chain: DNA topoisomerase 1 (689 aa).

The region spanning 3 to 113 (DNLVIVESPA…KENRVVFNEI (111 aa)) is the Toprim domain. Mg(2+) is bound by residues E9 and D82. One can recognise a Topo IA-type catalytic domain in the interval 129–557 (EMNLVDAQQA…FFSSFKQDVE (429 aa)). The segment at 163–168 (SAGRVQ) is interaction with DNA. Catalysis depends on Y298, which acts as the O-(5'-phospho-DNA)-tyrosine intermediate. Residues 328-357 (SKRKASGKQGDQDAHEAIRPSSTMRTPDDM) are disordered. 3 consecutive C4-type zinc fingers follow at residues 577–603 (CEVC…FPDC), 617–645 (CPKC…YPEC), and 658–681 (CPKC…CSNC).

The protein belongs to the type IA topoisomerase family. In terms of assembly, monomer. It depends on Mg(2+) as a cofactor.

The enzyme catalyses ATP-independent breakage of single-stranded DNA, followed by passage and rejoining.. Releases the supercoiling and torsional tension of DNA, which is introduced during the DNA replication and transcription, by transiently cleaving and rejoining one strand of the DNA duplex. Introduces a single-strand break via transesterification at a target site in duplex DNA. The scissile phosphodiester is attacked by the catalytic tyrosine of the enzyme, resulting in the formation of a DNA-(5'-phosphotyrosyl)-enzyme intermediate and the expulsion of a 3'-OH DNA strand. The free DNA strand then undergoes passage around the unbroken strand, thus removing DNA supercoils. Finally, in the religation step, the DNA 3'-OH attacks the covalent intermediate to expel the active-site tyrosine and restore the DNA phosphodiester backbone. The protein is DNA topoisomerase 1 of Staphylococcus aureus.